A 341-amino-acid polypeptide reads, in one-letter code: Twinfilin-2 (341 aa).

2 consecutive ADF-H domains span residues 1 to 131 (ATEE…KHLS) and 169 to 305 (GLAF…DEVH). K6 bears the N6-acetyllysine mark. At Y301 the chain carries Phosphotyrosine. Positions 314–341 (AFAKPKGPGGKRGHKRLIRGPGENGDDS) are disordered. Residues 322–331 (GGKRGHKRLI) show a composition bias toward basic residues. S341 bears the Phosphoserine mark.

Belongs to the actin-binding proteins ADF family. Twinfilin subfamily. As to quaternary structure, interacts with G-actin; ADP-actin form and capping protein (CP). May also be able to interact with TWF1 and phosphoinositides, PI(4,5)P2. When bound to PI(4,5)P2, it is down-regulated. Interacts with MYO7A. Post-translationally, phosphorylated on both serine and threonine residues.

It localises to the cytoplasm. The protein resides in the cytoskeleton. Its subcellular location is the perinuclear region. It is found in the cell projection. The protein localises to the stereocilium. Functionally, actin-binding protein involved in motile and morphological processes. Inhibits actin polymerization, likely by sequestering G-actin. By capping the barbed ends of filaments, it also regulates motility. Seems to play an important role in clathrin-mediated endocytosis and distribution of endocytic organelles. May play a role in regulating the mature length of the middle and short rows of stereocilia. The sequence is that of Twinfilin-2 (TWF2) from Pongo abelii (Sumatran orangutan).